The following is a 205-amino-acid chain: Probable transcription factor Ken (205 aa).

C2H2-type zinc fingers lie at residues Tyr-106–His-128, Phe-134–His-157, and Tyr-173–His-196.

The protein resides in the nucleus. Functionally, probable transcription factor, which is required for terminalia development. The polypeptide is Probable transcription factor Ken (ken) (Drosophila yakuba (Fruit fly)).